An 869-amino-acid chain; its full sequence is Protein translocase subunit SecA (869 aa).

Residues glutamine 85, 103–107 (GEGKT), and aspartate 508 contribute to the ATP site.

The protein belongs to the SecA family. As to quaternary structure, monomer and homodimer. Part of the essential Sec protein translocation apparatus which comprises SecA, SecYEG and auxiliary proteins SecDF. Other proteins may also be involved.

The protein localises to the cell membrane. Its subcellular location is the cytoplasm. It catalyses the reaction ATP + H2O + cellular proteinSide 1 = ADP + phosphate + cellular proteinSide 2.. Functionally, part of the Sec protein translocase complex. Interacts with the SecYEG preprotein conducting channel. Has a central role in coupling the hydrolysis of ATP to the transfer of proteins into and across the cell membrane, serving as an ATP-driven molecular motor driving the stepwise translocation of polypeptide chains across the membrane. In Deinococcus geothermalis (strain DSM 11300 / CIP 105573 / AG-3a), this protein is Protein translocase subunit SecA.